The following is a 120-amino-acid chain: Large ribosomal subunit protein bL17 (120 aa).

The protein belongs to the bacterial ribosomal protein bL17 family. As to quaternary structure, part of the 50S ribosomal subunit. Contacts protein L32.

This Mesomycoplasma hyopneumoniae (strain J / ATCC 25934 / NCTC 10110) (Mycoplasma hyopneumoniae) protein is Large ribosomal subunit protein bL17.